Here is a 407-residue protein sequence, read N- to C-terminus: Imidazolonepropionase (407 aa).

Residues His-72 and His-74 each coordinate Fe(3+). 2 residues coordinate Zn(2+): His-72 and His-74. 4-imidazolone-5-propanoate is bound by residues Arg-81, Tyr-144, and His-177. Position 144 (Tyr-144) interacts with N-formimidoyl-L-glutamate. Residue His-242 coordinates Fe(3+). Zn(2+) is bound at residue His-242. Gln-245 provides a ligand contact to 4-imidazolone-5-propanoate. Asp-317 is a binding site for Fe(3+). A Zn(2+)-binding site is contributed by Asp-317. N-formimidoyl-L-glutamate-binding residues include Asn-319 and Gly-321. Thr-322 contributes to the 4-imidazolone-5-propanoate binding site.

Belongs to the metallo-dependent hydrolases superfamily. HutI family. The cofactor is Zn(2+). It depends on Fe(3+) as a cofactor.

It localises to the cytoplasm. The catalysed reaction is 4-imidazolone-5-propanoate + H2O = N-formimidoyl-L-glutamate. It participates in amino-acid degradation; L-histidine degradation into L-glutamate; N-formimidoyl-L-glutamate from L-histidine: step 3/3. Functionally, catalyzes the hydrolytic cleavage of the carbon-nitrogen bond in imidazolone-5-propanoate to yield N-formimidoyl-L-glutamate. It is the third step in the universal histidine degradation pathway. The polypeptide is Imidazolonepropionase (Rhizobium rhizogenes (Agrobacterium rhizogenes)).